The sequence spans 404 residues: Tryptophan synthase beta chain (404 aa).

Lys94 carries the post-translational modification N6-(pyridoxal phosphate)lysine.

It belongs to the TrpB family. As to quaternary structure, tetramer of two alpha and two beta chains. It depends on pyridoxal 5'-phosphate as a cofactor.

The catalysed reaction is (1S,2R)-1-C-(indol-3-yl)glycerol 3-phosphate + L-serine = D-glyceraldehyde 3-phosphate + L-tryptophan + H2O. The protein operates within amino-acid biosynthesis; L-tryptophan biosynthesis; L-tryptophan from chorismate: step 5/5. The beta subunit is responsible for the synthesis of L-tryptophan from indole and L-serine. In Staphylococcus aureus (strain JH1), this protein is Tryptophan synthase beta chain.